The chain runs to 477 residues: POC1 centriolar protein homolog B (477 aa).

WD repeat units follow at residues 16–55 (GHKA…RAYR), 58–97 (GHKD…KSSE), 100–139 (AHTA…FLYS), 142–181 (RHTH…CVNN), 183–223 (SDSV…LLQH), 226–265 (VHSC…LIYT), and 268–307 (GHTG…VHYR). Residues 449-469 (EQRLSLTEDKLKDCLENQQKL) adopt a coiled-coil conformation.

The protein belongs to the WD repeat POC1 family. Interacts with POC1A. Interacts with FAM161A. Interacts with CEP44; the interaction is direct and recruits POC1B to centriolar microtubules. Forms a microtubule-associated complex with POC5, CETN2 and FAM161A. Interacts with CCDC15. In terms of processing, phosphorylated in mitotic cells that may be mediated by CDK1.

It is found in the cytoplasm. It localises to the cytoskeleton. Its subcellular location is the microtubule organizing center. The protein localises to the centrosome. The protein resides in the centriole. It is found in the cilium basal body. It localises to the spindle pole. Plays an important role in centriole assembly and/or stability and ciliogenesis. Involved in early steps of centriole duplication, as well as in the later steps of centriole length control. Acts in concert with POC1A to ensure centriole integrity and proper mitotic spindle formation. Required for primary cilia formation, ciliary length and also cell proliferation. Required for retinal integrity. Acts as a positive regulator of centriole elongation. The chain is POC1 centriolar protein homolog B (Poc1b) from Rattus norvegicus (Rat).